Reading from the N-terminus, the 993-residue chain is MASADDYFSDFEDDELDKLYEKAINKSVKETITRRAVPVQKDLHDNVLPGQKTVYEEIQRDVSFGPTHHELDYDALSFYVYPTNYEVRDYQYTIVHKSLFQNTLCAIPTGMGKTFIASTVMLNYFRWTKKAKIIFTAPTRPLVAQQIKACLGITGIPSDQTAILLDKSRKNREEIWANKRVFFATPQVVENDLKRGVLDPKDIVCLVIDEAHRATGSSAYTNVVKFIDRFNSSYRLLALTATPASDLEGVQEVVNNLDISKIEIRTEESMDIVKYMKKRKKEKIEVPLLLEIEDIIEQLGMAVKPVLQQAIELGIYEECDPSQINAFKAMQQSQKIIANPTIPEGIKWRNFFILQLLNNVGQMLKRLKIYGIRTFFNYFQNKCTEFTTKYNLKKSTNKIAAEFYYHPILKNIKNQCENYLSDPKFVGHGKLQCVRDELMDFFQKRGSDSRVIIFTELRESALEIVKFIDSVADDQIRPHIFIGQARAKEGFDEVKYTRKHAPKGRKKVERLHRQEQEKFLEAERTKRAANDKLERSARRTGSSEEAQISGMNQKMQKEVIHNFKKGEYNVLVCTSIGEEGLDIGEVDLIICYDTTSSPIKNIQRMGRTGRKRDGKIVLLFSSNESYKFERAMEDYSTLQALISKQCIDYKKSDRIIPEDIIPECHETLITINDENEIINEMEDVDEVIRYATQCMMGKKVKPKKAITKKKRVQENKKPKKFFMPDNVETSIVSASTLINKFLVNESGGKQLVTSNENPSKKRKIFKALDNLENDSTEEASSSLETEDEEVSDDNNVFIAEGQNGCQKDLETAIIRTGESLTTLKPLHNFERPNMALFVNDCGLPTKIEKNVKDIRGNQHNLEKEKSCTVDKNNMVLSLDDWNFFRNRYIPEGVSFDVEPNFVQYTKGVKVPHCHKVSKIITLFNDESNDNKKRTIDMNYTKCLARGMLRDEKKFVKVNDKSQVDNNSVNHDSSQSFTLSNAELDDILGSDSDF.

Residues 94–261 (IVHKSLFQNT…EVVNNLDISK (168 aa)) form the Helicase ATP-binding domain. Position 107–114 (107–114 (IPTGMGKT)) interacts with ATP. The short motif at 209 to 212 (DEAH) is the DEAH box element. In terms of domain architecture, Helicase C-terminal spans 507 to 655 (KVERLHRQEQ…CIDYKKSDRI (149 aa)). The segment at 530–551 (NDKLERSARRTGSSEEAQISGM) is disordered. Over residues 539–551 (RTGSSEEAQISGM) the composition is skewed to polar residues. The tract at residues 751–810 (LVTSNENPSKKRKIFKALDNLENDSTEEASSSLETEDEEVSDDNNVFIAEGQNGCQKDLE) is FKH1-binding region. Phosphothreonine is present on residues Thr-776 and Thr-785.

The protein belongs to the DEAD box helicase family. DEAH subfamily. FANCM sub-subfamily. Interacts with the MHF histone-fold complex composed of MHF1 and MHF2 to form the FANCM-MHF complex. Interacts with FHK1. Post-translationally, phosphorylation at both Thr-776 and Thr-785 is required for the interaction with FKH1.

It localises to the nucleus. The catalysed reaction is ATP + H2O = ADP + phosphate + H(+). Its function is as follows. ATP-dependent DNA helicase involved in DNA damage repair by homologous recombination and in genome maintenance. Capable of unwinding D-loops. Plays a role in limiting crossover recombinants during mitotic DNA double-strand break (DSB) repair. Prevents crossovers between ectopic sequences by removing substrates for MUS81-MMS4 or RAD1-RAD10 cleavage. Component of a FANCM-MHF complex which promotes gene conversion at blocked replication forks, probably by reversal of the stalled fork. Binds to flap-structured DNA but not to non-flap nicked DNA, and participates in Okazaki fragment processing by stimulating the endonuclease activities of FEN1 and DNA2. Involved in recombination donor preference during mating-type switching via interaction with FKH1. The chain is ATP-dependent DNA helicase MPH1 from Saccharomyces cerevisiae (strain ATCC 204508 / S288c) (Baker's yeast).